The primary structure comprises 313 residues: Protoheme IX farnesyltransferase (313 aa).

Transmembrane regions (helical) follow at residues 34-54, 56-76, 105-125, 128-148, 152-172, 173-193, 237-257, and 291-311; these read VIELLLVTTIPAMLLADRGTV, PLLIINTLVGGLLAAAGANTL, HALIFGLTLSVASFFWLWSTT, LSAHLAGATIAFYVLVYTLLL, TSQNVVWGGAAGCMPVMIGWS, AVTGTIQWPALVMFLIIFFWT, VLATLALALTTGWLYASVAIL, and YLAVVFVALAVDSALALPTLL.

This sequence belongs to the UbiA prenyltransferase family. Protoheme IX farnesyltransferase subfamily.

It localises to the cell membrane. The catalysed reaction is heme b + (2E,6E)-farnesyl diphosphate + H2O = Fe(II)-heme o + diphosphate. It participates in porphyrin-containing compound metabolism; heme O biosynthesis; heme O from protoheme: step 1/1. Converts heme B (protoheme IX) to heme O by substitution of the vinyl group on carbon 2 of heme B porphyrin ring with a hydroxyethyl farnesyl side group. This is Protoheme IX farnesyltransferase from Mycolicibacterium gilvum (strain PYR-GCK) (Mycobacterium gilvum (strain PYR-GCK)).